Reading from the N-terminus, the 128-residue chain is Large ribosomal subunit protein mL51 (128 aa).

The N-terminal 31 residues, 1-31 (MAGSVPWAASRRLWGWVPSACRSFSLGVPRL), are a transit peptide targeting the mitochondrion.

The protein belongs to the mitochondrion-specific ribosomal protein mL51 family. Component of the mitochondrial ribosome large subunit (39S) which comprises a 16S rRNA and about 50 distinct proteins. Interacts with OXA1L.

The protein resides in the mitochondrion. The protein is Large ribosomal subunit protein mL51 (Mrpl51) of Mus musculus (Mouse).